The sequence spans 138 residues: Large-conductance mechanosensitive channel (138 aa).

3 consecutive transmembrane segments (helical) span residues 15 to 35, 38 to 58, and 80 to 100; these read VDLAIGVIIGGAFGGLVNSIV, IIMPIIGLITGGIDFSNMFIQ, and GNFITLLINFMIIAWVLFLVV.

It belongs to the MscL family. Homopentamer.

It localises to the cell inner membrane. In terms of biological role, channel that opens in response to stretch forces in the membrane lipid bilayer. May participate in the regulation of osmotic pressure changes within the cell. This Brucella ovis (strain ATCC 25840 / 63/290 / NCTC 10512) protein is Large-conductance mechanosensitive channel.